A 181-amino-acid chain; its full sequence is MTEYVVLVNEQGDAIGTMEKLEAHEKGLLHLAFSVLLYRETDLGKEFLLQKRAECKYHSKNKWSNTCCSHPRVNENVEVAGTRRLNEEIGITGVLPEQFVNLGWFIYQAELENGLSEHEQDYILIANTPDVSFILNPEEVSDIQWWSEADIEKEMKANPDTFSVWFPTVYKKVLTHLQQVN.

Residues histidine 24 and histidine 30 each coordinate Mn(2+). One can recognise a Nudix hydrolase domain in the interval 28–168 (LLHLAFSVLL…PDTFSVWFPT (141 aa)). Residue cysteine 68 is part of the active site. Cysteine 68 provides a ligand contact to Mg(2+). Residue histidine 70 coordinates Mn(2+). Glutamate 88 is a Mg(2+) binding site. The Mn(2+) site is built by glutamate 117 and glutamate 119. Glutamate 119 is an active-site residue.

Belongs to the IPP isomerase type 1 family. It depends on Mg(2+) as a cofactor. Mn(2+) serves as cofactor.

It localises to the cytoplasm. The catalysed reaction is isopentenyl diphosphate = dimethylallyl diphosphate. Its pathway is isoprenoid biosynthesis; dimethylallyl diphosphate biosynthesis; dimethylallyl diphosphate from isopentenyl diphosphate: step 1/1. Catalyzes the 1,3-allylic rearrangement of the homoallylic substrate isopentenyl (IPP) to its highly electrophilic allylic isomer, dimethylallyl diphosphate (DMAPP). The protein is Isopentenyl-diphosphate Delta-isomerase of Aliivibrio fischeri (strain ATCC 700601 / ES114) (Vibrio fischeri).